Consider the following 252-residue polypeptide: Hydroxyacylglutathione hydrolase (252 aa).

Zn(2+)-binding residues include His-54, His-56, Asp-58, His-59, His-111, Asp-130, and His-170.

Belongs to the metallo-beta-lactamase superfamily. Glyoxalase II family. Monomer. Requires Zn(2+) as cofactor.

The enzyme catalyses an S-(2-hydroxyacyl)glutathione + H2O = a 2-hydroxy carboxylate + glutathione + H(+). The protein operates within secondary metabolite metabolism; methylglyoxal degradation; (R)-lactate from methylglyoxal: step 2/2. Its function is as follows. Thiolesterase that catalyzes the hydrolysis of S-D-lactoyl-glutathione to form glutathione and D-lactic acid. This Francisella tularensis subsp. tularensis (strain FSC 198) protein is Hydroxyacylglutathione hydrolase.